Consider the following 336-residue polypeptide: Serpentine receptor class beta-15 (336 aa).

The next 7 helical transmembrane spans lie at 24 to 44 (LFIH…FVIF), 57 to 77 (FLFS…AIIS), 109 to 129 (IFMS…FIAM), 142 to 162 (LGPI…FFIY), 186 to 206 (FTFF…NSYL), 237 to 257 (VFVV…IMIL), and 276 to 296 (GAFT…AVYL).

This sequence belongs to the nematode receptor-like protein srb family.

The protein localises to the membrane. The chain is Serpentine receptor class beta-15 (srb-15) from Caenorhabditis elegans.